We begin with the raw amino-acid sequence, 278 residues long: Phosphonates import ATP-binding protein PhnC (278 aa).

Residues Leu25–Ser273 form the ABC transporter domain. ATP is bound at residue Gly58–Ser65.

It belongs to the ABC transporter superfamily. Phosphonates importer (TC 3.A.1.9.1) family. As to quaternary structure, the complex is composed of two ATP-binding proteins (PhnC), two transmembrane proteins (PhnE) and a solute-binding protein (PhnD).

Its subcellular location is the cell inner membrane. It carries out the reaction phosphonate(out) + ATP + H2O = phosphonate(in) + ADP + phosphate + H(+). Part of the ABC transporter complex PhnCDE involved in phosphonates import. Responsible for energy coupling to the transport system. The chain is Phosphonates import ATP-binding protein PhnC from Yersinia pestis bv. Antiqua (strain Antiqua).